The chain runs to 291 residues: 4-hydroxy-tetrahydrodipicolinate synthase (291 aa).

T45 is a binding site for pyruvate. The Proton donor/acceptor role is filled by Y133. K161 functions as the Schiff-base intermediate with substrate in the catalytic mechanism. I203 provides a ligand contact to pyruvate.

Belongs to the DapA family. As to quaternary structure, homotetramer; dimer of dimers.

It localises to the cytoplasm. The enzyme catalyses L-aspartate 4-semialdehyde + pyruvate = (2S,4S)-4-hydroxy-2,3,4,5-tetrahydrodipicolinate + H2O + H(+). The protein operates within amino-acid biosynthesis; L-lysine biosynthesis via DAP pathway; (S)-tetrahydrodipicolinate from L-aspartate: step 3/4. Its function is as follows. Catalyzes the condensation of (S)-aspartate-beta-semialdehyde [(S)-ASA] and pyruvate to 4-hydroxy-tetrahydrodipicolinate (HTPA). The polypeptide is 4-hydroxy-tetrahydrodipicolinate synthase (Neisseria meningitidis serogroup C / serotype 2a (strain ATCC 700532 / DSM 15464 / FAM18)).